Consider the following 282-residue polypeptide: Probable endonuclease 4 (282 aa).

Zn(2+)-binding residues include H67, H107, E144, D178, H181, H215, D228, H230, and E260.

Belongs to the AP endonuclease 2 family. It depends on Zn(2+) as a cofactor.

It catalyses the reaction Endonucleolytic cleavage to 5'-phosphooligonucleotide end-products.. Endonuclease IV plays a role in DNA repair. It cleaves phosphodiester bonds at apurinic or apyrimidinic (AP) sites, generating a 3'-hydroxyl group and a 5'-terminal sugar phosphate. The sequence is that of Probable endonuclease 4 from Methanoculleus marisnigri (strain ATCC 35101 / DSM 1498 / JR1).